A 209-amino-acid polypeptide reads, in one-letter code: Outer-membrane lipoprotein LolB (209 aa).

The signal sequence occupies residues 1-21 (MNNMKTFKFLTALFATAILTA). Cys-22 carries N-palmitoyl cysteine lipidation. Cys-22 is lipidated: S-diacylglycerol cysteine.

It belongs to the LolB family. In terms of assembly, monomer.

The protein localises to the cell outer membrane. In terms of biological role, plays a critical role in the incorporation of lipoproteins in the outer membrane after they are released by the LolA protein. In Haemophilus influenzae (strain 86-028NP), this protein is Outer-membrane lipoprotein LolB.